We begin with the raw amino-acid sequence, 293 residues long: Undecaprenyl-diphosphatase (293 aa).

5 helical membrane passes run 107-127 (WMIIVATIPVVVLGVLGKDLI), 134-154 (MWITATVLVLFSFVFILAEKV), 207-227 (FSFLLAIPAVLGSGLYSLPDA), 243-263 (IGTLVAFLVGYASIAWLMKFV), and 268-288 (FSWFAAYRIPAGLLVMLLLWL).

Belongs to the UppP family.

It is found in the cell membrane. It catalyses the reaction di-trans,octa-cis-undecaprenyl diphosphate + H2O = di-trans,octa-cis-undecaprenyl phosphate + phosphate + H(+). Functionally, catalyzes the dephosphorylation of undecaprenyl diphosphate (UPP). Confers resistance to bacitracin. In Corynebacterium efficiens (strain DSM 44549 / YS-314 / AJ 12310 / JCM 11189 / NBRC 100395), this protein is Undecaprenyl-diphosphatase.